The following is an 85-amino-acid chain: Putative N.vectensis toxin 1 9 (85 aa).

The signal sequence occupies residues methionine 1 to alanine 20. Positions arginine 21 to serine 36 are excised as a propeptide. 3 disulfide bridges follow: cysteine 42–cysteine 82, cysteine 44–cysteine 72, and cysteine 65–cysteine 83.

The protein belongs to the sea anemone sodium channel inhibitory toxin family. Type II subfamily. In terms of tissue distribution, expressed in ectodermal glands and in clumps outside of the extodermal layer. Is not expressed in nematocytes. In adult female tissues, shows similar expression levels in mesenteries (gametes-producing tissue), tentacles, pharynx and physa.

The protein localises to the secreted. In terms of biological role, binds to site 3 of voltage-gated sodium channels and inhibits the inactivation process. Is highly active on DmNav1/TipE (drosophila) and is only extremely weakly active on rat Nav1.4-beta-1/SCN4A-SCN1B, and on human Nav1.5-beta-1/SCN5A-beta-1. This reveals high specificity for arthropod over mammalian channels. In vivo, when released into the medium, this recombinant toxin induces impaired swimming, paralysis and death of the crustacean A.nauplii within several hours. Also causes paralysis of cherry shrimps immediately after injection at very low doses. Its effect on zebrafish (D.rerio) larvae is also rapid, since it induces tail twitching accompanied by impaired swimming after 20 minutes and complete paralysis within 45 minutes. It has also been observed to cause death of zebrafish larvae within 1 hour. This is Putative N.vectensis toxin 1 9 from Nematostella vectensis (Starlet sea anemone).